Here is a 174-residue protein sequence, read N- to C-terminus: Small ribosomal subunit protein bS16 (174 aa).

Positions 81–174 (QRFTGEPAPP…DATTDATPSA (94 aa)) are disordered. Pro residues predominate over residues 87 to 97 (PAPPPMKTAPP). Basic and acidic residues predominate over residues 98-118 (KPDKKALFEAAAKEAAGEPRA). Positions 135-158 (ETTPAAEAAPDAAASADEPAGGAS) are enriched in low complexity. Residues 160–174 (AAESQDATTDATPSA) show a composition bias toward polar residues.

It belongs to the bacterial ribosomal protein bS16 family.

The chain is Small ribosomal subunit protein bS16 from Acidothermus cellulolyticus (strain ATCC 43068 / DSM 8971 / 11B).